A 312-amino-acid polypeptide reads, in one-letter code: Probable rRNA-processing protein EBP2 (312 aa).

The interval 1–32 is disordered; sequence MLHHEDESSPESDSDFDASELTDKELQEAFSQ. Positions 8-20 are enriched in acidic residues; that stretch reads SSPESDSDFDASE. A coiled-coil region spans residues 140–176; sequence EMAKTDQHMQKIRHKLQLKQASMEKSEKAKQLRALRK. A disordered region spans residues 211-312; the sequence is LDFLEGDQTP…VRQKMKSKRR (102 aa). Basic residues predominate over residues 282-312; sequence KGPHRPGKKGGKNANKRPGKNVRQKMKSKRR.

This sequence belongs to the EBP2 family.

It is found in the nucleus. The protein resides in the nucleolus. Its function is as follows. Required for the processing of the 27S pre-rRNA. In Xenopus laevis (African clawed frog), this protein is Probable rRNA-processing protein EBP2 (ebna1bp2).